The following is a 408-amino-acid chain: Imidazolonepropionase (408 aa).

Fe(3+)-binding residues include H66 and H68. The Zn(2+) site is built by H66 and H68. 4-imidazolone-5-propanoate contacts are provided by R75, Y138, and H171. Y138 lines the N-formimidoyl-L-glutamate pocket. H236 contacts Fe(3+). H236 serves as a coordination point for Zn(2+). Q239 contributes to the 4-imidazolone-5-propanoate binding site. D311 provides a ligand contact to Fe(3+). D311 is a binding site for Zn(2+). N-formimidoyl-L-glutamate-binding residues include N313 and G315. S316 provides a ligand contact to 4-imidazolone-5-propanoate.

Belongs to the metallo-dependent hydrolases superfamily. HutI family. Requires Zn(2+) as cofactor. Fe(3+) serves as cofactor.

The protein localises to the cytoplasm. It carries out the reaction 4-imidazolone-5-propanoate + H2O = N-formimidoyl-L-glutamate. It functions in the pathway amino-acid degradation; L-histidine degradation into L-glutamate; N-formimidoyl-L-glutamate from L-histidine: step 3/3. Catalyzes the hydrolytic cleavage of the carbon-nitrogen bond in imidazolone-5-propanoate to yield N-formimidoyl-L-glutamate. It is the third step in the universal histidine degradation pathway. The polypeptide is Imidazolonepropionase (Idiomarina loihiensis (strain ATCC BAA-735 / DSM 15497 / L2-TR)).